A 462-amino-acid chain; its full sequence is Chromosomal replication initiator protein DnaA (462 aa).

The interval 1 to 84 is domain I, interacts with DnaA modulators; that stretch reads MAVSLWQQCI…RFDIGSRPSA (84 aa). The interval 84-125 is domain II; the sequence is ARTVQPAPAAPRPTTGHTQTKARVGTAFNIQAEPMANANHRS. Residues 126 to 342 form a domain III, AAA+ region region; that stretch reads NINPTYQFDN…GALNRVIANA (217 aa). ATP is bound by residues Gly170, Gly172, Lys173, and Thr174. Positions 343-462 are domain IV, binds dsDNA; the sequence is NFTGRPITID…YANLIRTLSS (120 aa).

The protein belongs to the DnaA family. As to quaternary structure, oligomerizes as a right-handed, spiral filament on DNA at oriC.

The protein localises to the cytoplasm. Plays an essential role in the initiation and regulation of chromosomal replication. ATP-DnaA binds to the origin of replication (oriC) to initiate formation of the DNA replication initiation complex once per cell cycle. Binds the DnaA box (a 9 base pair repeat at the origin) and separates the double-stranded (ds)DNA. Forms a right-handed helical filament on oriC DNA; dsDNA binds to the exterior of the filament while single-stranded (ss)DNA is stabiized in the filament's interior. The ATP-DnaA-oriC complex binds and stabilizes one strand of the AT-rich DNA unwinding element (DUE), permitting loading of DNA polymerase. After initiation quickly degrades to an ADP-DnaA complex that is not apt for DNA replication. Binds acidic phospholipids. The chain is Chromosomal replication initiator protein DnaA from Shewanella denitrificans (strain OS217 / ATCC BAA-1090 / DSM 15013).